A 331-amino-acid chain; its full sequence is Bifunctional nuclease 1 (331 aa).

The 136-residue stretch at 126-261 folds into the BFN domain; sequence CVQNNPRVLR…RIAYNNGLKV (136 aa). Residues 291 to 326 enclose the UVR domain; the sequence is EAQEFDLVRNMLVAAVEERYKDAAQYRDQLFMFRAK.

This sequence belongs to the bifunctional nuclease family.

It is found in the nucleus. Functionally, bifunctional nuclease with both RNase and DNase activities. Involved in basal defense response. Participates in abscisic acid-derived callose deposition following infection by a necrotrophic pathogen. This Oryza sativa subsp. japonica (Rice) protein is Bifunctional nuclease 1 (BBD1).